A 386-amino-acid polypeptide reads, in one-letter code: 1-deoxy-D-xylulose 5-phosphate reductoisomerase (386 aa).

Residues Thr7, Gly8, Ser9, Ile10, Ala33, and Asn124 each contribute to the NADPH site. Position 125 (Lys125) interacts with 1-deoxy-D-xylulose 5-phosphate. NADPH is bound at residue Glu126. Residue Asp148 coordinates Mn(2+). 4 residues coordinate 1-deoxy-D-xylulose 5-phosphate: Ser149, Glu150, Ser174, and His197. Glu150 provides a ligand contact to Mn(2+). Residue Gly203 coordinates NADPH. 1-deoxy-D-xylulose 5-phosphate-binding residues include Ser210, Asn215, Lys216, and Glu219. Glu219 is a Mn(2+) binding site.

The protein belongs to the DXR family. The cofactor is Mg(2+). It depends on Mn(2+) as a cofactor.

It catalyses the reaction 2-C-methyl-D-erythritol 4-phosphate + NADP(+) = 1-deoxy-D-xylulose 5-phosphate + NADPH + H(+). Its pathway is isoprenoid biosynthesis; isopentenyl diphosphate biosynthesis via DXP pathway; isopentenyl diphosphate from 1-deoxy-D-xylulose 5-phosphate: step 1/6. Catalyzes the NADPH-dependent rearrangement and reduction of 1-deoxy-D-xylulose-5-phosphate (DXP) to 2-C-methyl-D-erythritol 4-phosphate (MEP). The sequence is that of 1-deoxy-D-xylulose 5-phosphate reductoisomerase from Kitasatospora griseola (Streptomyces griseolosporeus).